Reading from the N-terminus, the 473-residue chain is Dol-P-Glc:Glc(2)Man(9)GlcNAc(2)-PP-Dol alpha-1,2-glucosyltransferase (473 aa).

The Cytoplasmic portion of the chain corresponds to 1 to 6 (MAQLEG). The helical transmembrane segment at 7 to 27 (YCFSAALSCTFLVSCLLFSAF) threads the bilayer. Residues 28-64 (SRALREPYMDEIFHLPQAQRYCEGHFSLSQWDPMITT) are Extracellular-facing. Residues 65–85 (LPGLYLVSVGVVKPAIWIFAW) form a helical membrane-spanning segment. Over 86 to 97 (SEHVVCSIGMLR) the chain is Cytoplasmic. Residues 98 to 118 (FVNLLFSVGNFYLLYLLFHKV) traverse the membrane as a helical segment. Residues 119 to 126 (QPRNKAAS) lie on the Extracellular side of the membrane. A helical transmembrane segment spans residues 127–147 (SIQRVLSTLTLAVFPTLYFFN). At 148 to 150 (FLY) the chain is on the cytoplasmic side. A helical membrane pass occupies residues 151–171 (YTEAGSMFFTLFAYLMCLYGN). Topologically, residues 172-175 (HKTS) are extracellular. The helical transmembrane segment at 176-196 (AFLGFCGFMFRQTNIIWAVFC) threads the bilayer. The Cytoplasmic segment spans residues 197-256 (AGNVIAQKLTEAWKTELQKKEDRLPPIKGPFAEFRKILQFLLAYSMSFKNLSMLFCLTWP). A helical transmembrane segment spans residues 257–277 (YILLGFLFCAFVVVNGGIVIG). The Extracellular segment spans residues 278–283 (DRSSHE). A helical membrane pass occupies residues 284 to 304 (ACLHFPQLFYFFSFTLFFSFP). Residues 305 to 317 (HLLSPSKIKTFLS) lie on the Cytoplasmic side of the membrane. The chain crosses the membrane as a helical span at residues 318–338 (LVWKHGILFLVVTLVSVFLVW). Residues 339 to 365 (KFTYAHKYLLADNRHYTFYVWKRVFQR) are Extracellular-facing. A helical membrane pass occupies residues 366–386 (YAILKYLLVPAYIFAGWSIAD). Topologically, residues 387-392 (SLKSKP) are cytoplasmic. Residues 393 to 413 (IFWNLMFFICLFIVIVPQKLL) traverse the membrane as a helical segment. At 414 to 436 (EFRYFILPYVIYRLNITLPPTSR) the chain is on the extracellular side. Residues 437–457 (LVCELSCYAIVNFITFYIFLN) traverse the membrane as a helical segment. The Cytoplasmic portion of the chain corresponds to 458–473 (KTFQWPNSQDIQRFMW).

It belongs to the ALG10 glucosyltransferase family. In terms of assembly, interacts with KCNH1; may regulate KCNH1, possibly by regulating its N-glycosylation. Interacts with KCNH2; may reduce KCNH2 sensitivity to classic proarrhythmic drug blockade, possibly by regulating its N-glycosylation. In terms of tissue distribution, highly expressed in heart, placenta, liver, kidney and pancreas. Weakly expressed in lung, skeletal muscle and brain.

The protein resides in the endoplasmic reticulum membrane. It carries out the reaction an alpha-D-Glc-(1-&gt;3)-alpha-D-Glc-(1-&gt;3)-alpha-D-Man-(1-&gt;2)-alpha-D-Man-(1-&gt;2)-alpha-D-Man-(1-&gt;3)-[alpha-D-Man-(1-&gt;2)-alpha-D-Man-(1-&gt;3)-[alpha-D-Man-(1-&gt;2)-alpha-D-Man-(1-&gt;6)]-alpha-D-Man-(1-&gt;6)]-beta-D-Man-(1-&gt;4)-beta-D-GlcNAc-(1-&gt;4)-alpha-D-GlcNAc-diphospho-di-trans,poly-cis-dolichol + a di-trans,poly-cis-dolichyl beta-D-glucosyl phosphate = a alpha-D-Glc-(1-&gt;2)-alpha-D-Glc-(1-&gt;3)-alpha-D-Glc-(1-&gt;3)-alpha-D-Man-(1-&gt;2)-alpha-D-Man-(1-&gt;2)-alpha-D-Man-(1-&gt;3)-[alpha-D-Man-(1-&gt;2)-alpha-D-Man-(1-&gt;3)-[alpha-D-Man-(1-&gt;2)-alpha-D-Man-(1-&gt;6)]-alpha-D-Man-(1-&gt;6)]-beta-D-Man-(1-&gt;4)-beta-D-GlcNAc-(1-&gt;4)-alpha-D-GlcNAc-diphospho-di-trans,poly-cis-dolichol + a di-trans,poly-cis-dolichyl phosphate + H(+). It participates in protein modification; protein glycosylation. Functionally, dol-P-Glc:Glc(2)Man(9)GlcNAc(2)-PP-Dol alpha-1,2-glucosyltransferase that operates in the biosynthetic pathway of dolichol-linked oligosaccharides, the glycan precursors employed in protein asparagine (N)-glycosylation. The assembly of dolichol-linked oligosaccharides begins on the cytosolic side of the endoplasmic reticulum membrane and finishes in its lumen. The sequential addition of sugars to dolichol pyrophosphate produces dolichol-linked oligosaccharides containing fourteen sugars, including two GlcNAcs, nine mannoses and three glucoses. Once assembled, the oligosaccharide is transferred from the lipid to nascent proteins by oligosaccharyltransferases. In the lumen of the endoplasmic reticulum, adds the third and last glucose residue from dolichyl phosphate glucose (Dol-P-Glc) onto the lipid-linked oligosaccharide intermediate Glc(2)Man(9)GlcNAc(2)-PP-Dol to produce Glc(3)Man(9)GlcNAc(2)-PP-Dol. The protein is Dol-P-Glc:Glc(2)Man(9)GlcNAc(2)-PP-Dol alpha-1,2-glucosyltransferase of Homo sapiens (Human).